The chain runs to 469 residues: Probable Xaa-Pro aminopeptidase AN0832 (469 aa).

Mn(2+)-binding residues include aspartate 260, aspartate 271, glutamate 398, and glutamate 437.

The protein belongs to the peptidase M24B family. The cofactor is Mn(2+).

The enzyme catalyses Release of any N-terminal amino acid, including proline, that is linked to proline, even from a dipeptide or tripeptide.. Catalyzes the removal of a penultimate prolyl residue from the N-termini of peptides. This Emericella nidulans (strain FGSC A4 / ATCC 38163 / CBS 112.46 / NRRL 194 / M139) (Aspergillus nidulans) protein is Probable Xaa-Pro aminopeptidase AN0832.